The chain runs to 361 residues: Isopentenyl-diphosphate delta-isomerase (361 aa).

12–13 (RK) serves as a coordination point for substrate. Residues Ser-70, 71–73 (SMT), Ser-101, and Asn-130 contribute to the FMN site. 101-103 (SMR) provides a ligand contact to substrate. Gln-165 contacts substrate. Glu-166 contacts Mg(2+). Residues Lys-197 and 310 to 311 (AG) contribute to the FMN site.

It belongs to the IPP isomerase type 2 family. In terms of assembly, homooctamer. Dimer of tetramers. FMN is required as a cofactor. The cofactor is NADPH. It depends on Mg(2+) as a cofactor.

The protein localises to the cytoplasm. It catalyses the reaction isopentenyl diphosphate = dimethylallyl diphosphate. Its function is as follows. Involved in the biosynthesis of isoprenoids. Catalyzes the 1,3-allylic rearrangement of the homoallylic substrate isopentenyl (IPP) to its allylic isomer, dimethylallyl diphosphate (DMAPP). This Chlorobium luteolum (strain DSM 273 / BCRC 81028 / 2530) (Pelodictyon luteolum) protein is Isopentenyl-diphosphate delta-isomerase.